Consider the following 144-residue polypeptide: Ribosome-binding factor A (144 aa).

Residues 120–144 (DKRRMAEAGREEDEAAPDDTTEDKA) form a disordered region. The segment covering 129-144 (REEDEAAPDDTTEDKA) has biased composition (acidic residues).

Belongs to the RbfA family. As to quaternary structure, monomer. Binds 30S ribosomal subunits, but not 50S ribosomal subunits or 70S ribosomes.

It localises to the cytoplasm. One of several proteins that assist in the late maturation steps of the functional core of the 30S ribosomal subunit. Associates with free 30S ribosomal subunits (but not with 30S subunits that are part of 70S ribosomes or polysomes). Required for efficient processing of 16S rRNA. May interact with the 5'-terminal helix region of 16S rRNA. The chain is Ribosome-binding factor A from Aeromonas salmonicida (strain A449).